The sequence spans 206 residues: Protein-methionine-sulfoxide reductase heme-binding subunit MsrQ (206 aa).

The next 6 membrane-spanning stretches (helical) occupy residues 14–34 (IKPL…WLGA), 45–65 (FLTR…LAIT), 82–102 (MCGL…VWWD), 118–138 (PFIT…ATST), 149–169 (WQTL…HFWW), and 179–199 (QPLL…AAWW).

This sequence belongs to the MsrQ family. In terms of assembly, heterodimer of a catalytic subunit (MsrP) and a heme-binding subunit (MsrQ). It depends on FMN as a cofactor. Heme b is required as a cofactor.

The protein localises to the cell inner membrane. Part of the MsrPQ system that repairs oxidized periplasmic proteins containing methionine sulfoxide residues (Met-O), using respiratory chain electrons. Thus protects these proteins from oxidative-stress damage caused by reactive species of oxygen and chlorine generated by the host defense mechanisms. MsrPQ is essential for the maintenance of envelope integrity under bleach stress, rescuing a wide series of structurally unrelated periplasmic proteins from methionine oxidation. MsrQ provides electrons for reduction to the reductase catalytic subunit MsrP, using the quinone pool of the respiratory chain. This chain is Protein-methionine-sulfoxide reductase heme-binding subunit MsrQ, found in Bordetella pertussis (strain Tohama I / ATCC BAA-589 / NCTC 13251).